A 494-amino-acid polypeptide reads, in one-letter code: Adenosylhomocysteinase (494 aa).

Thr72, Asp155, and Glu217 together coordinate substrate. 218 to 220 (TTT) is a binding site for NAD(+). Positions 247 and 251 each coordinate substrate. Residues Asn252, 281 to 286 (GYGDVG), Glu304, Asn339, 360 to 362 (IGH), and Asn408 contribute to the NAD(+) site.

It belongs to the adenosylhomocysteinase family. NAD(+) serves as cofactor.

Its subcellular location is the cytoplasm. The enzyme catalyses S-adenosyl-L-homocysteine + H2O = L-homocysteine + adenosine. The protein operates within amino-acid biosynthesis; L-homocysteine biosynthesis; L-homocysteine from S-adenosyl-L-homocysteine: step 1/1. May play a key role in the regulation of the intracellular concentration of adenosylhomocysteine. The polypeptide is Adenosylhomocysteinase (Nocardia farcinica (strain IFM 10152)).